We begin with the raw amino-acid sequence, 209 residues long: Egg case collagen (209 aa).

The segment at V1–V129 is nonhelical region. The triple-helical region stretch occupies residues L130 to V209. Positions P138–V209 are disordered. Over residues G142 to G162 the composition is skewed to gly residues.

Major component of the egg case wall which is secreted by the oviduct. The egg case combines mechanical strength and toughness with high permeability to small molecules and ions. The protein is Egg case collagen of Scyliorhinus canicula (Small-spotted catshark).